The chain runs to 178 residues: MSAMSAPSDELVVIGKIVSVHGVRGDVKVYSFTDPIDNLLDYRRWTLRRGDEVKQVELVKGRLQGKILVASLKGLTDREVARTYADFEICVPRSELPALDDGEYYWYQLQGLKVLNQAGQLLGQVDHLLETGANDVLVVKPCAGSLDDRERLLPYTDHCVLKVDLDSGEMQVDWDADF.

In terms of domain architecture, PRC barrel spans 101–178 (DGEYYWYQLQ…EMQVDWDADF (78 aa)).

This sequence belongs to the RimM family. Binds ribosomal protein uS19.

Its subcellular location is the cytoplasm. Its function is as follows. An accessory protein needed during the final step in the assembly of 30S ribosomal subunit, possibly for assembly of the head region. Essential for efficient processing of 16S rRNA. May be needed both before and after RbfA during the maturation of 16S rRNA. It has affinity for free ribosomal 30S subunits but not for 70S ribosomes. This is Ribosome maturation factor RimM from Stutzerimonas stutzeri (strain A1501) (Pseudomonas stutzeri).